Consider the following 162-residue polypeptide: Probable E3 ubiquitin-protein ligase XERICO (162 aa).

Residues 12–28 traverse the membrane as a helical segment; sequence GMLCVILVNTALSISIV. The RING-type; atypical zinc finger occupies 103–145; the sequence is CSVCLSKFQGDSEINKLKCGHLFHKTCLEKWIDYWNITCPLCR.

Interacts with UBC8 and TULP9. As to expression, ubiquitous. Higher expression in actively growing tissues.

The protein localises to the membrane. The catalysed reaction is S-ubiquitinyl-[E2 ubiquitin-conjugating enzyme]-L-cysteine + [acceptor protein]-L-lysine = [E2 ubiquitin-conjugating enzyme]-L-cysteine + N(6)-ubiquitinyl-[acceptor protein]-L-lysine.. It functions in the pathway protein modification; protein ubiquitination. Function on abscisic acid homeostasis at post-translational level, probably through ubiquitin/proteasome-dependent substrate-specific degradation. This is Probable E3 ubiquitin-protein ligase XERICO (XERICO) from Arabidopsis thaliana (Mouse-ear cress).